An 898-amino-acid chain; its full sequence is Metalloprotease StcE (898 aa).

The signal sequence occupies residues 1-35; that stretch reads MNTKMNERWRTPMKLKYLSCTILAPLAIGVFSATA. Residues 296 to 551 form the Peptidase M66 domain; that stretch reads ELLLHTIDIG…QRFFENKAVF (256 aa). Residue His-446 coordinates Zn(2+). Glu-447 is a catalytic residue. His-450 and His-456 together coordinate Zn(2+).

Zn(2+) serves as cofactor.

The protein resides in the secreted. With respect to regulation, inhibited by divalent cation chelators such as BPS and EDTA. Virulence factor that contributes to intimate adherence of enterohemorrhagic E.coli (EHEC) O157:H7 to host cells. Is able to cleave the secreted human mucin 7 (MUC7) and the glycoprotein 340 (DMBT1/GP340). Also cleaves human C1 inhibitor (SERPING1), a regulator of multiple inflammatory pathways, and binds and localizes it to bacterial and host cell surfaces, protecting them from complement-mediated lysis. Therefore, the current model proposes two roles for StcE during infection: it acts first as a mucinase, allowing passage of EHEC through the oral cavity by cleaving the salivary glycoproteins that are responsible for bacterial aggregation. Similarly, in the colon, StcE cleaves the glycoproteins that protect the intestinal epithelial surface, allowing EHEC to come into close contact with host cell membranes. Secondly, it acts as an anti-inflammatory agent by localizing SERPING1 to cell membranes. The chain is Metalloprotease StcE (stcE) from Escherichia coli O157:H7.